The sequence spans 383 residues: ERCC4 domain-containing protein EP364R (383 aa).

In terms of domain architecture, ERCC4 spans 3–101; it reads FLVADHREHH…QLYFFVEGPA (99 aa). The interval 336–367 is disordered; that stretch reads LHKVSDEASENASHDASENASDKVSSPTGHQT. Basic and acidic residues predominate over residues 347–356; the sequence is ASHDASENAS. Residues 357–367 are compositionally biased toward polar residues; it reads DKVSSPTGHQT.

Belongs to the asfivirus EP364R family.

In terms of biological role, plays a role in the inhibition of type I interferon signaling pathway. Mechanistically, specifically interacts with 2',3'-cGAMP and cleaves it via its phosphodiesterase activity. In turn, prevents 2',3'-cGAMP interaction with host ER-resident STING1 leading to inhibition of downstream signaling pathway and type I interferon production. The sequence is that of ERCC4 domain-containing protein EP364R from Ornithodoros (relapsing fever ticks).